A 291-amino-acid polypeptide reads, in one-letter code: MQLKKAFWKLASLLPLSLLLFLGGCDKKLAVLNPQGPVAKAQYDLIVWSFLLMSLIIAIVFILFTVILIRYREKPENMDYEPPEQHGNTLLEIIWTLVPVIIVIALSIPTVKATYASEEVPKESKHIKPVEIYVTSANWKWLFSYPEEKIETVNYLNIPAGVPIQFKLTSVGPMNAFWVPELGGMKYTMDGMIMDLYLQADKPGSYLGRSANFSGEGFTHMEFEVEAKTKEKYDKWVKEVQETAPKLTEAKYNEIVKPGVVGRMTFSSHHLSYVDPKSLEYCDYNYYKNKK.

A signal peptide spans 1-28 (MQLKKAFWKLASLLPLSLLLFLGGCDKK). 2 helical membrane passes run 49 to 69 (SFLL…VILI) and 91 to 111 (LEII…IPTV).

This sequence belongs to the cytochrome c oxidase subunit 2 family.

It is found in the cell membrane. It catalyses the reaction 2 a quinol + O2 = 2 a quinone + 2 H2O. Its function is as follows. Catalyzes quinol oxidation with the concomitant reduction of oxygen to water. Subunit II transfers the electrons from a quinol to the binuclear center of the catalytic subunit I. This Bacillus cereus (strain ATCC 14579 / DSM 31 / CCUG 7414 / JCM 2152 / NBRC 15305 / NCIMB 9373 / NCTC 2599 / NRRL B-3711) protein is Quinol oxidase subunit 2.